We begin with the raw amino-acid sequence, 481 residues long: 3-isopropylmalate dehydratase large subunit (481 aa).

[4Fe-4S] cluster contacts are provided by C357, C417, and C420. A compositionally biased stretch (polar residues) spans 429 to 441 (SPGQRCASTSNRN). Positions 429–451 (SPGQRCASTSNRNFEGRQGKGGR) are disordered.

Belongs to the aconitase/IPM isomerase family. LeuC type 1 subfamily. Heterodimer of LeuC and LeuD. [4Fe-4S] cluster is required as a cofactor.

The catalysed reaction is (2R,3S)-3-isopropylmalate = (2S)-2-isopropylmalate. It participates in amino-acid biosynthesis; L-leucine biosynthesis; L-leucine from 3-methyl-2-oxobutanoate: step 2/4. Catalyzes the isomerization between 2-isopropylmalate and 3-isopropylmalate, via the formation of 2-isopropylmaleate. This chain is 3-isopropylmalate dehydratase large subunit, found in Mycobacterium sp. (strain JLS).